A 316-amino-acid chain; its full sequence is MSLDVVVVMDPIASIKIAKDTTFAMLLEAQRRGHRLHYVRPGGLSLREGRAVAQVAPLSVREDKTSWFTLGEFAELAFGPGQVVLMRKDPPVDAEFVYDTQVLSVAQRAGAQIVNDPQGLRDYNEKLAALLFPQCCPPTLVSRDAAALKAFVLEHGQAVLKPLDGMGGRSIFRSGSGDPNLNVILETLTDGNRKLTLAQRFIPDITAGDKRILLVDGLPVDYCLARIPQGDEFRGNLAAGGRGEGRPLSERDRWIAAQVGPEMRRRGMRFVGLDVIGDYLTEVNVTSPTCVRELDAQFGLNIAGLLFDAIEAGAAQ.

Residues 124–311 form the ATP-grasp domain; that stretch reads NEKLAALLFP…IAGLLFDAIE (188 aa). An ATP-binding site is contributed by 151-208; sequence FVLEHGQAVLKPLDGMGGRSIFRSGSGDPNLNVILETLTDGNRKLTLAQRFIPDITAG. Glu282 and Asn284 together coordinate Mg(2+).

It belongs to the prokaryotic GSH synthase family. Mg(2+) is required as a cofactor. Mn(2+) serves as cofactor.

The catalysed reaction is gamma-L-glutamyl-L-cysteine + glycine + ATP = glutathione + ADP + phosphate + H(+). Its pathway is sulfur metabolism; glutathione biosynthesis; glutathione from L-cysteine and L-glutamate: step 2/2. This Xanthomonas axonopodis pv. citri (strain 306) protein is Glutathione synthetase.